The sequence spans 756 residues: Catalase-peroxidase (756 aa).

A cross-link (tryptophyl-tyrosyl-methioninium (Trp-Tyr) (with M-270)) is located at residues 91 to 244; that stretch reads WHSAGTYRTG…LAAVQMGLIY (154 aa). Catalysis depends on His-92, which acts as the Proton acceptor. Positions 198–230 are disordered; the sequence is AQKKMQQPGDGTLVAEPENHANEESRTASGERN. Residues 214-223 are compositionally biased toward basic and acidic residues; the sequence is PENHANEESR. The segment at residues 244-270 is a cross-link (tryptophyl-tyrosyl-methioninium (Tyr-Met) (with W-91)); the sequence is YVNPEGPEGVPDPVASARDIRETFGRM. Heme b is bound at residue His-285.

Belongs to the peroxidase family. Peroxidase/catalase subfamily. Homodimer or homotetramer. It depends on heme b as a cofactor. Formation of the three residue Trp-Tyr-Met cross-link is important for the catalase, but not the peroxidase activity of the enzyme.

The enzyme catalyses H2O2 + AH2 = A + 2 H2O. The catalysed reaction is 2 H2O2 = O2 + 2 H2O. Functionally, bifunctional enzyme with both catalase and broad-spectrum peroxidase activity. In Pseudomonas syringae pv. syringae (strain B728a), this protein is Catalase-peroxidase.